The primary structure comprises 432 residues: Pachytene checkpoint protein 2 homolog (432 aa).

179-186 (GPPGTGKT) contacts ATP.

Belongs to the AAA ATPase family. PCH2 subfamily.

Plays a key role in chromosome recombination and chromosome structure development during meiosis. Required at early steps in meiotic recombination that leads to non-crossovers pathways. Also needed for efficient completion of homologous synapsis by influencing crossover distribution along the chromosomes affecting both crossovers and non-crossovers pathways. This is Pachytene checkpoint protein 2 homolog (TRIP13) from Gallus gallus (Chicken).